Consider the following 277-residue polypeptide: Proteasome subunit beta type-7 (277 aa).

Residues Met1 to Gly43 constitute a propeptide, removed in mature form. Catalysis depends on Thr44, which acts as the Nucleophile.

The protein belongs to the peptidase T1B family. As to quaternary structure, the 26S proteasome consists of a 20S proteasome core and two 19S regulatory subunits. The 20S proteasome core is a barrel-shaped complex made of 28 subunits that are arranged in four stacked rings. The two outer rings are each formed by seven alpha subunits, and the two inner rings are formed by seven beta subunits. The proteolytic activity is exerted by three beta-subunits PSMB5, PSMB6 and PSMB7.

The protein localises to the cytoplasm. It localises to the nucleus. The enzyme catalyses Cleavage of peptide bonds with very broad specificity.. Component of the 20S core proteasome complex involved in the proteolytic degradation of most intracellular proteins. This complex plays numerous essential roles within the cell by associating with different regulatory particles. Associated with two 19S regulatory particles, forms the 26S proteasome and thus participates in the ATP-dependent degradation of ubiquitinated proteins. The 26S proteasome plays a key role in the maintenance of protein homeostasis by removing misfolded or damaged proteins that could impair cellular functions, and by removing proteins whose functions are no longer required. Associated with the PA200 or PA28, the 20S proteasome mediates ubiquitin-independent protein degradation. This type of proteolysis is required in several pathways including spermatogenesis (20S-PA200 complex) or generation of a subset of MHC class I-presented antigenic peptides (20S-PA28 complex). Within the 20S core complex, PSMB7 displays a trypsin-like activity. This Mus musculus (Mouse) protein is Proteasome subunit beta type-7 (Psmb7).